A 345-amino-acid polypeptide reads, in one-letter code: Heat-inducible transcription repressor HrcA (345 aa).

The protein belongs to the HrcA family.

In terms of biological role, negative regulator of class I heat shock genes (grpE-dnaK-dnaJ and groELS operons). Prevents heat-shock induction of these operons. The chain is Heat-inducible transcription repressor HrcA from Listeria welshimeri serovar 6b (strain ATCC 35897 / DSM 20650 / CCUG 15529 / CIP 8149 / NCTC 11857 / SLCC 5334 / V8).